Reading from the N-terminus, the 398-residue chain is Acetate kinase (398 aa).

Mg(2+) is bound at residue Asn8. Lys15 is an ATP binding site. Arg92 contacts substrate. The Proton donor/acceptor role is filled by Asp149. Residues 209–213 (HLGNG), 283–285 (DFR), and 331–335 (GVGEN) contribute to the ATP site. Residue Glu385 participates in Mg(2+) binding.

It belongs to the acetokinase family. Homodimer. Mg(2+) is required as a cofactor. It depends on Mn(2+) as a cofactor.

The protein localises to the cytoplasm. The catalysed reaction is acetate + ATP = acetyl phosphate + ADP. The protein operates within metabolic intermediate biosynthesis; acetyl-CoA biosynthesis; acetyl-CoA from acetate: step 1/2. Its function is as follows. Catalyzes the formation of acetyl phosphate from acetate and ATP. Can also catalyze the reverse reaction. In Corynebacterium efficiens (strain DSM 44549 / YS-314 / AJ 12310 / JCM 11189 / NBRC 100395), this protein is Acetate kinase.